Reading from the N-terminus, the 478-residue chain is Secretogranin-3 (478 aa).

An N-terminal signal peptide occupies residues Met-1 to Ala-21. Disordered regions lie at residues Phe-22 to Asp-126 and Ile-208 to Leu-287. Positions Pro-28–Leu-42 are enriched in basic and acidic residues. The span at Ala-63–Ile-74 shows a compositional bias: acidic residues. A compositionally biased stretch (basic and acidic residues) spans Ala-97–Ser-120. Residues Asp-235–Arg-259 show a composition bias toward acidic residues.

The protein localises to the cytoplasmic vesicle. It is found in the secretory vesicle lumen. It localises to the secretory vesicle membrane. Its subcellular location is the secreted. The chain is Secretogranin-3 (scg3) from Danio rerio (Zebrafish).